The chain runs to 329 residues: Endo-beta-N-acetylglucosaminidase F3 (329 aa).

A signal peptide (or 40, or 41) is located at residues 1–39 (MKKIFFAQCSILLLMLGSCSKMTEDMTPESVNKEASVKS). Residues 48-329 (GVCIAYYITD…ANAVRDAVKN (282 aa)) enclose the GH18 domain. O-linked (Man...) threonine glycosylation is present at T88. E167 acts as the Proton donor in catalysis.

Belongs to the glycosyl hydrolase 18 family. As to quaternary structure, monomer. Post-translationally, carbohydrate at Thr-88 consists of (2-OMe)Man1-4GlcNAcU1-4GlcU1-4Glc1-4(2-OMe)GlcU1-4[(2-OMe)Rham1-2]Man.

It is found in the secreted. The enzyme catalyses an N(4)-(oligosaccharide-(1-&gt;3)-[oligosaccharide-(1-&gt;6)]-beta-D-Man-(1-&gt;4)-beta-D-GlcNAc-(1-&gt;4)-alpha-D-GlcNAc)-L-asparaginyl-[protein] + H2O = an oligosaccharide-(1-&gt;3)-[oligosaccharide-(1-&gt;6)]-beta-D-Man-(1-&gt;4)-D-GlcNAc + N(4)-(N-acetyl-beta-D-glucosaminyl)-L-asparaginyl-[protein]. In terms of biological role, endohydrolysis of the di-N-acetylchitobiosyl unit in high-mannose glycopeptides and glycoproteins. Hydrolyzes bi- and triantennary glycans. The presence of a core-bound fucose greatly augments endo F3 activity on biantennary and, presumably, triantennary oligosaccharides. The chain is Endo-beta-N-acetylglucosaminidase F3 (endOF3) from Elizabethkingia meningoseptica (Chryseobacterium meningosepticum).